A 504-amino-acid polypeptide reads, in one-letter code: Maturase K (504 aa).

This sequence belongs to the intron maturase 2 family. MatK subfamily.

The protein localises to the plastid. It is found in the chloroplast. In terms of biological role, usually encoded in the trnK tRNA gene intron. Probably assists in splicing its own and other chloroplast group II introns. This is Maturase K from Pentaplaris doroteae.